Consider the following 270-residue polypeptide: Phosphatidylglycerol--prolipoprotein diacylglyceryl transferase (270 aa).

7 helical membrane-spanning segments follow: residues 14–34 (VAFT…ILAL), 60–80 (YFFW…IAIY), 103–123 (FVGI…LATI), 133–153 (LWQL…FGRI), 181–201 (PSQL…LFFY), 209–229 (GELI…CEFF), and 235–255 (GIGF…LMFF). Arg-152 is a binding site for a 1,2-diacyl-sn-glycero-3-phospho-(1'-sn-glycerol).

The protein belongs to the Lgt family.

It localises to the cell inner membrane. The catalysed reaction is L-cysteinyl-[prolipoprotein] + a 1,2-diacyl-sn-glycero-3-phospho-(1'-sn-glycerol) = an S-1,2-diacyl-sn-glyceryl-L-cysteinyl-[prolipoprotein] + sn-glycerol 1-phosphate + H(+). It functions in the pathway protein modification; lipoprotein biosynthesis (diacylglyceryl transfer). Functionally, catalyzes the transfer of the diacylglyceryl group from phosphatidylglycerol to the sulfhydryl group of the N-terminal cysteine of a prolipoprotein, the first step in the formation of mature lipoproteins. The protein is Phosphatidylglycerol--prolipoprotein diacylglyceryl transferase of Campylobacter curvus (strain 525.92).